The chain runs to 470 residues: Cytochrome P450 monooxygenase FUM2 (470 aa).

C414 lines the heme pocket.

Belongs to the cytochrome P450 family. Heme is required as a cofactor.

The protein operates within mycotoxin biosynthesis. Cytochrome P450 monooxygenase; part of the gene cluster that mediates the biosynthesis of fumonisins B1 (FB1), B2 (FB2), B3 (FB3), and B4 (FB4), which are carcinogenic mycotoxins. Within the pathway, FUM2 performs the C-10 hydroxylation present in FB2 and FB4 and which occurs early in the biosynthesis. The biosynthesis starts with the FUM1-catalyzed carbon chain assembly from one molecule of acetyl-CoA, eight molecules of malonyl-CoA, and two molecules of methionine (in S-adenosyl form). The C18 polyketide chain is released from the enzyme by a nucleophilic attack of a carbanion, which is derived from R-carbon of alanine by decarboxylation, on the carbonyl carbon of polyketide acyl chain. This step is catalyzed by the pyridoxal 5'-phosphate-dependent aminoacyl transferase FUM8. The resultant 3-keto intermediate is then stereospecifically reduced to a 3-hydroxyl product by reductase FUM13. Subsequent oxidations at C-10 by the cytochrome P450 monooxygenase FUM2, C-14 and C-15 by FUM6, FUM12 or FUM15, tricarballylic esterification of the hydroxyl groups on C-14 and C-15 by acyltransferase FUM14, and C-5 hydroxylation by 2-keto-glutarate-dependent dioxygenase FUM3 furnish the biosynthesis of fumonisins. The tricarballylic moieties are most likely derived from the citric acid cycle, and their addition to the carbon backbone may involve FUM7, FUM10, FUM11 and FUM14. The sequence is that of Cytochrome P450 monooxygenase FUM2 from Gibberella moniliformis (strain M3125 / FGSC 7600) (Maize ear and stalk rot fungus).